The chain runs to 305 residues: GMP synthase [glutamine-hydrolyzing] subunit B (305 aa).

One can recognise a GMPS ATP-PPase domain in the interval 2 to 185 (VETEEFIAEA…LGLEEVISER (184 aa)). ATP is bound at residue 29–35 (SGGVDSS).

As to quaternary structure, heterodimer composed of a glutamine amidotransferase subunit (A) and a GMP-binding subunit (B).

The enzyme catalyses XMP + L-glutamine + ATP + H2O = GMP + L-glutamate + AMP + diphosphate + 2 H(+). It participates in purine metabolism; GMP biosynthesis; GMP from XMP (L-Gln route): step 1/1. Functionally, catalyzes the synthesis of GMP from XMP. The protein is GMP synthase [glutamine-hydrolyzing] subunit B of Halorubrum lacusprofundi (strain ATCC 49239 / DSM 5036 / JCM 8891 / ACAM 34).